The following is a 121-amino-acid chain: Small ribosomal subunit protein uS13 (121 aa).

The segment at 91 to 121 is disordered; the sequence is HRRGLPVRGQNTKNNARTRKGPSKTVAGKKK. Positions 106–121 are enriched in basic residues; it reads ARTRKGPSKTVAGKKK.

This sequence belongs to the universal ribosomal protein uS13 family. As to quaternary structure, part of the 30S ribosomal subunit. Forms a loose heterodimer with protein S19. Forms two bridges to the 50S subunit in the 70S ribosome.

Functionally, located at the top of the head of the 30S subunit, it contacts several helices of the 16S rRNA. In the 70S ribosome it contacts the 23S rRNA (bridge B1a) and protein L5 of the 50S subunit (bridge B1b), connecting the 2 subunits; these bridges are implicated in subunit movement. Contacts the tRNAs in the A and P-sites. The sequence is that of Small ribosomal subunit protein uS13 from Listeria welshimeri serovar 6b (strain ATCC 35897 / DSM 20650 / CCUG 15529 / CIP 8149 / NCTC 11857 / SLCC 5334 / V8).